A 468-amino-acid chain; its full sequence is UDP-N-acetylmuramate--L-alanine ligase (468 aa).

Residue 116 to 122 (GTHGKTT) coordinates ATP.

The protein belongs to the MurCDEF family.

It localises to the cytoplasm. It carries out the reaction UDP-N-acetyl-alpha-D-muramate + L-alanine + ATP = UDP-N-acetyl-alpha-D-muramoyl-L-alanine + ADP + phosphate + H(+). It participates in cell wall biogenesis; peptidoglycan biosynthesis. Cell wall formation. This is UDP-N-acetylmuramate--L-alanine ligase from Fusobacterium nucleatum subsp. nucleatum (strain ATCC 25586 / DSM 15643 / BCRC 10681 / CIP 101130 / JCM 8532 / KCTC 2640 / LMG 13131 / VPI 4355).